The primary structure comprises 208 residues: Thioredoxin domain-containing protein 9 (208 aa).

The region spanning 68-179 is the Thioredoxin domain; it reads YEEVADEKEF…MENRLARSEV (112 aa).

Expressed throughout the body with high expression in the nervous system, including the ventral nerve cord and tail neurons, and vulva.

The protein localises to the nucleus. It is found in the cytoplasm. Its function is as follows. Required for normal microtubule organization and function. Regulates tubulin acetylation in ALM and PLM neurons. This chain is Thioredoxin domain-containing protein 9, found in Caenorhabditis elegans.